The chain runs to 626 residues: ATP-dependent zinc metalloprotease FtsH (626 aa).

At 1–7 (MNGNRPN) the chain is on the cytoplasmic side. Residues 8 to 28 (YISLIFAALVILSLFWLVRSF) traverse the membrane as a helical segment. At 29 to 108 (YFDTSAPSKM…VTGEKGVSSS (80 aa)) the chain is on the periplasmic side. Residues 109-129 (FWVNVIGNVIFIGFLLFMFFF) form a helical membrane-spanning segment. Topologically, residues 130–626 (MMRTISGRNN…RAAAGSEQDS (497 aa)) are cytoplasmic. 202 to 209 (GPPGTGKT) contacts ATP. A Zn(2+)-binding site is contributed by H424. Residue E425 is part of the active site. Positions 428 and 501 each coordinate Zn(2+).

It in the central section; belongs to the AAA ATPase family. The protein in the C-terminal section; belongs to the peptidase M41 family. Homohexamer. Zn(2+) is required as a cofactor.

It is found in the cell inner membrane. Its function is as follows. Acts as a processive, ATP-dependent zinc metallopeptidase for both cytoplasmic and membrane proteins. Plays a role in the quality control of integral membrane proteins. The chain is ATP-dependent zinc metalloprotease FtsH from Pseudothermotoga lettingae (strain ATCC BAA-301 / DSM 14385 / NBRC 107922 / TMO) (Thermotoga lettingae).